Consider the following 122-residue polypeptide: Holo-[acyl-carrier-protein] synthase (122 aa).

Mg(2+) contacts are provided by aspartate 8 and glutamate 56.

Belongs to the P-Pant transferase superfamily. AcpS family. Requires Mg(2+) as cofactor.

It localises to the cytoplasm. The catalysed reaction is apo-[ACP] + CoA = holo-[ACP] + adenosine 3',5'-bisphosphate + H(+). Its function is as follows. Transfers the 4'-phosphopantetheine moiety from coenzyme A to a Ser of acyl-carrier-protein. The sequence is that of Holo-[acyl-carrier-protein] synthase from Alkaliphilus oremlandii (strain OhILAs) (Clostridium oremlandii (strain OhILAs)).